The primary structure comprises 569 residues: Neutral leucine aminopeptidase, chloroplastic (569 aa).

The N-terminal 48 residues, 1–48 (MNGVLCSSSSSFHSYPSIFTKFQSSPIWSFSISVTPLCSRRAKRMAHS), are a transit peptide targeting the chloroplast. K339 and D344 together coordinate Mn(2+). Residue K351 is part of the active site. 3 residues coordinate Mn(2+): D364, D424, and E426. Residue R428 is part of the active site.

It belongs to the peptidase M17 family. Homohexamer (dimer of homotrimers). Requires Mn(2+) as cofactor. In terms of tissue distribution, expressed constitutively at low levels. Expressed in vegetative and reproductive organs, including leaves, stems, roots, cotyledons (after imbibition), pistils, sepals, petals, stamens, and floral buds (at protein level). Present at very low levels in healthy leaves.

The protein localises to the plastid. The protein resides in the chloroplast. It catalyses the reaction Release of an N-terminal amino acid, Xaa-|-Yaa-, in which Xaa is preferably Leu, but may be other amino acids including Pro although not Arg or Lys, and Yaa may be Pro. Amino acid amides and methyl esters are also readily hydrolyzed, but rates on arylamides are exceedingly low.. It carries out the reaction Release of N-terminal proline from a peptide.. In terms of biological role, catalyzes the removal of unsubstituted N-terminal amino acids from various peptides. When associated as homohexamer, catalyzes the proteolyzes of Xaa-Leu dipeptides. Possesses leucine aminopeptidase activity against the model substrate leucine-amido methyl coumarin. Presumably involved in the processing and regular turnover of intracellular proteins. Its function is as follows. Functions as a molecular chaperone to protect proteins from heat-induced damage. The chain is Neutral leucine aminopeptidase, chloroplastic from Solanum lycopersicum (Tomato).